A 448-amino-acid polypeptide reads, in one-letter code: Antizyme inhibitor 1 (448 aa).

It belongs to the Orn/Lys/Arg decarboxylase class-II family. ODC antizyme inhibitor subfamily. In terms of assembly, monomer. Interacts with OAZ1 and OAZ3; this interaction disrupts the interaction between the antizyme and ODC1. Post-translationally, ubiquitinated, leading to its proteasomal degradation; a process that is reduced in presence of antizyme OAZ1.

It localises to the nucleus. Antizyme inhibitor (AZI) protein that positively regulates ornithine decarboxylase (ODC) activity and polyamine uptake. AZI is an enzymatically inactive ODC homolog that counteracts the negative effect of ODC antizymes (AZs) OAZ1, OAZ2 and OAZ3 on ODC activity by competing with ODC for antizyme-binding. Inhibits antizyme-dependent ODC degradation and releases ODC monomers from their inactive complex with antizymes, leading to formation of the catalytically active ODC homodimer and restoring polyamine production. The protein is Antizyme inhibitor 1 (AZIN1) of Pongo abelii (Sumatran orangutan).